The sequence spans 76 residues: Bacteriocin uberolysin (76 aa).

Positions 1 to 6 are excised as a propeptide; it reads MDILLE. The segment at residues 7 to 76 is a cross-link (cyclopeptide (Leu-Trp)); that stretch reads LAGYTGIASG…RNLKAQAVIW (70 aa).

This sequence belongs to the bacteriocin class V family.

It is found in the secreted. Its function is as follows. Cyclopeptide antibiotic with bacteriolytic activity against most streptococci (except S.rattus and S.mutans), Listeria spp., enterococci and staphylococci. In Streptococcus uberis, this protein is Bacteriocin uberolysin (ublA).